A 459-amino-acid polypeptide reads, in one-letter code: Methionine aminopeptidase 2-2 (459 aa).

Basic and acidic residues predominate over residues 1–12 (MGSKSPEDHRQG). The disordered stretch occupies residues 1–87 (MGSKSPEDHR…KKLSVVQQTS (87 aa)). Residues 43–54 (GQDEDGDDDDDE) show a composition bias toward acidic residues. Residues 55–66 (KTGIDLKTNDGA) are compositionally biased toward basic and acidic residues. Positions 67 to 79 (KKKRKRNKKKSKK) are enriched in basic residues. H210 contributes to the substrate binding site. A divalent metal cation-binding residues include D231, D242, and H311. Residue H319 coordinates substrate. A divalent metal cation contacts are provided by E344 and E440.

This sequence belongs to the peptidase M24A family. Methionine aminopeptidase eukaryotic type 2 subfamily. It depends on Co(2+) as a cofactor. Zn(2+) is required as a cofactor. Mn(2+) serves as cofactor. The cofactor is Fe(2+).

The protein localises to the cytoplasm. The catalysed reaction is Release of N-terminal amino acids, preferentially methionine, from peptides and arylamides.. Cotranslationally removes the N-terminal methionine from nascent proteins. The N-terminal methionine is often cleaved when the second residue in the primary sequence is small and uncharged (Met-Ala-, Cys, Gly, Pro, Ser, Thr, or Val). This Pyrenophora teres f. teres (strain 0-1) (Barley net blotch fungus) protein is Methionine aminopeptidase 2-2.